A 72-amino-acid chain; its full sequence is SPbeta prophage-derived uncharacterized protein YorV (72 aa).

The protein is SPbeta prophage-derived uncharacterized protein YorV (yorV) of Bacillus subtilis (strain 168).